The primary structure comprises 173 residues: Ribosome maturation factor RimM (173 aa).

The 75-residue stretch at 97–171 (EGEFFYHEII…QITIEPMEGL (75 aa)) folds into the PRC barrel domain.

The protein belongs to the RimM family. Binds ribosomal protein uS19.

Its subcellular location is the cytoplasm. Functionally, an accessory protein needed during the final step in the assembly of 30S ribosomal subunit, possibly for assembly of the head region. Essential for efficient processing of 16S rRNA. May be needed both before and after RbfA during the maturation of 16S rRNA. It has affinity for free ribosomal 30S subunits but not for 70S ribosomes. The sequence is that of Ribosome maturation factor RimM from Halalkalibacterium halodurans (strain ATCC BAA-125 / DSM 18197 / FERM 7344 / JCM 9153 / C-125) (Bacillus halodurans).